A 48-amino-acid polypeptide reads, in one-letter code: ATP synthase protein 8 (48 aa).

The chain crosses the membrane as a helical span at residues L13–P33.

The protein belongs to the ATPase protein 8 family. F-type ATPases have 2 components, CF(1) - the catalytic core - and CF(0) - the membrane proton channel.

The protein localises to the mitochondrion membrane. Mitochondrial membrane ATP synthase (F(1)F(0) ATP synthase or Complex V) produces ATP from ADP in the presence of a proton gradient across the membrane which is generated by electron transport complexes of the respiratory chain. F-type ATPases consist of two structural domains, F(1) - containing the extramembraneous catalytic core and F(0) - containing the membrane proton channel, linked together by a central stalk and a peripheral stalk. During catalysis, ATP synthesis in the catalytic domain of F(1) is coupled via a rotary mechanism of the central stalk subunits to proton translocation. Part of the complex F(0) domain. Minor subunit located with subunit a in the membrane. The sequence is that of ATP synthase protein 8 (ATP8) from Wickerhamomyces canadensis (Yeast).